Reading from the N-terminus, the 77-residue chain is Large ribosomal subunit protein uL24 (77 aa).

It belongs to the universal ribosomal protein uL24 family. In terms of assembly, part of the 50S ribosomal subunit.

Functionally, one of two assembly initiator proteins, it binds directly to the 5'-end of the 23S rRNA, where it nucleates assembly of the 50S subunit. Its function is as follows. One of the proteins that surrounds the polypeptide exit tunnel on the outside of the subunit. This chain is Large ribosomal subunit protein uL24, found in Campylobacter jejuni subsp. jejuni serotype O:6 (strain 81116 / NCTC 11828).